Here is a 1297-residue protein sequence, read N- to C-terminus: DNA-directed RNA polymerase subunit beta' (1297 aa).

Cys-60, Cys-62, Cys-75, and Cys-78 together coordinate Zn(2+). 3 residues coordinate Mg(2+): Asp-535, Asp-537, and Asp-539. 4 residues coordinate Zn(2+): Cys-883, Cys-961, Cys-968, and Cys-971.

Belongs to the RNA polymerase beta' chain family. In terms of assembly, the RNAP catalytic core consists of 2 alpha, 1 beta, 1 beta' and 1 omega subunit. When a sigma factor is associated with the core the holoenzyme is formed, which can initiate transcription. The cofactor is Mg(2+). Requires Zn(2+) as cofactor.

It catalyses the reaction RNA(n) + a ribonucleoside 5'-triphosphate = RNA(n+1) + diphosphate. Its function is as follows. DNA-dependent RNA polymerase catalyzes the transcription of DNA into RNA using the four ribonucleoside triphosphates as substrates. This Salinispora arenicola (strain CNS-205) protein is DNA-directed RNA polymerase subunit beta'.